Consider the following 311-residue polypeptide: Malate dehydrogenase (311 aa).

Residues 7-13 (GAAGGIG) and D34 each bind NAD(+). Residues R81 and R87 each contribute to the substrate site. Residues N94 and 117 to 119 (ITN) contribute to the NAD(+) site. N119 and R153 together coordinate substrate. The active-site Proton acceptor is H177. M227 is an NAD(+) binding site.

This sequence belongs to the LDH/MDH superfamily. MDH type 1 family. In terms of assembly, homodimer.

It catalyses the reaction (S)-malate + NAD(+) = oxaloacetate + NADH + H(+). Functionally, catalyzes the reversible oxidation of malate to oxaloacetate. This is Malate dehydrogenase from Vibrio parahaemolyticus serotype O3:K6 (strain RIMD 2210633).